An 871-amino-acid chain; its full sequence is Alanine--tRNA ligase (871 aa).

Residues histidine 561, histidine 565, cysteine 665, and histidine 669 each contribute to the Zn(2+) site.

It belongs to the class-II aminoacyl-tRNA synthetase family. The cofactor is Zn(2+).

It localises to the cytoplasm. It catalyses the reaction tRNA(Ala) + L-alanine + ATP = L-alanyl-tRNA(Ala) + AMP + diphosphate. Functionally, catalyzes the attachment of alanine to tRNA(Ala) in a two-step reaction: alanine is first activated by ATP to form Ala-AMP and then transferred to the acceptor end of tRNA(Ala). Also edits incorrectly charged Ser-tRNA(Ala) and Gly-tRNA(Ala) via its editing domain. This is Alanine--tRNA ligase from Dehalococcoides mccartyi (strain ATCC BAA-2266 / KCTC 15142 / 195) (Dehalococcoides ethenogenes (strain 195)).